A 164-amino-acid chain; its full sequence is Ribosome maturation factor RimM (164 aa).

Residues 90–161 form the PRC barrel domain; the sequence is KGSYFIADLI…TVTIKPLEIW (72 aa).

Belongs to the RimM family. In terms of assembly, binds ribosomal protein uS19.

The protein localises to the cytoplasm. In terms of biological role, an accessory protein needed during the final step in the assembly of 30S ribosomal subunit, possibly for assembly of the head region. Essential for efficient processing of 16S rRNA. May be needed both before and after RbfA during the maturation of 16S rRNA. It has affinity for free ribosomal 30S subunits but not for 70S ribosomes. This chain is Ribosome maturation factor RimM, found in Clostridium botulinum (strain Langeland / NCTC 10281 / Type F).